Here is a 130-residue protein sequence, read N- to C-terminus: Small ribosomal subunit protein uS11 (130 aa).

It belongs to the universal ribosomal protein uS11 family. As to quaternary structure, part of the 30S ribosomal subunit. Interacts with proteins S7 and S18. Binds to IF-3.

Functionally, located on the platform of the 30S subunit, it bridges several disparate RNA helices of the 16S rRNA. Forms part of the Shine-Dalgarno cleft in the 70S ribosome. The sequence is that of Small ribosomal subunit protein uS11 from Psychrobacter sp. (strain PRwf-1).